The primary structure comprises 235 residues: Phosphate-specific transport system accessory protein PhoU homolog 2 (235 aa).

Belongs to the PhoU family. Homodimer.

The protein resides in the cytoplasm. Functionally, plays a role in the regulation of phosphate uptake. The sequence is that of Phosphate-specific transport system accessory protein PhoU homolog 2 (phoU2) from Thermotoga maritima (strain ATCC 43589 / DSM 3109 / JCM 10099 / NBRC 100826 / MSB8).